The chain runs to 368 residues: MSNPTSTPRADGFRMPAEWEPHEQTWMVWPERPDNWRNGGKPAQAAFAAVAKAIARFEPVTVCASAGQYENARARLDDGNIRVVEISSDDAWVRDTGPTFVIDDKGDVRGVDWGFNAWGGFEGGLYFPWQRDDQVARKILEIERRARYRTDDFVLEGGSIHVDGEGTLITTEECLLNHNRNPHLSQVEIERTLRDYLAVDSIIWLPNGLYNDETDGHVDNFCCYVRPGEVLLAWTDDQDDPNYLRCQAALRVLEESRDAKGRKLVVHKMPIPGPLYATQEECDGVDIVEGSQPRDPSIRLAGSYVNFLIVNGGIVAPSFDDPKDAEARAILQRVFPEHEVVMVPGREILLGGGNIHCITQQQPAPRKA.

Cys357 acts as the Amidino-cysteine intermediate in catalysis.

It belongs to the agmatine deiminase family. As to quaternary structure, homodimer.

It carries out the reaction agmatine + H2O = N-carbamoylputrescine + NH4(+). Its pathway is amine and polyamine biosynthesis; putrescine biosynthesis via agmatine pathway; N-carbamoylputrescine from agmatine: step 1/1. Functionally, mediates the hydrolysis of agmatine into N-carbamoylputrescine in the arginine decarboxylase (ADC) pathway of putrescine biosynthesis, a basic polyamine. The polypeptide is Agmatine deiminase (Pseudomonas aeruginosa (strain UCBPP-PA14)).